The following is a 1797-amino-acid chain: Non-reducing polyketide synthase nscA (1797 aa).

The segment at 17-256 is N-terminal acylcarrier protein transacylase domain (SAT); sequence SDDLKDLFRR…PLPVYDGLCH (240 aa). A Ketosynthase family 3 (KS3) domain is found at 392–825; that stretch reads SSKLAIVGMA…GGNTTLLLED (434 aa). Residues cysteine 565, histidine 700, and histidine 743 each act as for beta-ketoacyl synthase activity in the active site. The malonyl-CoA:ACP transacylase (MAT) domain stretch occupies residues 931-1251; that stretch reads FTGQGAYYSG…SLVTLHLAGL (321 aa). The product template (PT) domain stretch occupies residues 1318-1637; sequence TSLIHQITAE…RLLMDRFFSP (320 aa). An N-terminal hotdog fold region spans residues 1322-1458; the sequence is HQITAETIES…ATVRFEDPAA (137 aa). The region spanning 1322-1632 is the PKS/mFAS DH domain; the sequence is HQITAETIES…FRRVPRLLMD (311 aa). Histidine 1354 functions as the Proton acceptor; for dehydratase activity in the catalytic mechanism. The interval 1482-1632 is C-terminal hotdog fold; the sequence is VEGKASRLSK…FRRVPRLLMD (151 aa). The active-site Proton donor; for dehydratase activity is the aspartate 1543. A compositionally biased stretch (polar residues) spans 1663–1686; that stretch reads SVPEISAPSPSIVVSDSTANNTLT. Residues 1663-1723 are disordered; sequence SVPEISAPSP…PESESAEPLG (61 aa). The segment covering 1698 to 1709 has biased composition (low complexity); it reads SSSESSTPKESP. The Carrier domain maps to 1720 to 1797; the sequence is EPLGNTVSQC…EMTAWIEEYC (78 aa). Serine 1757 carries the post-translational modification O-(pantetheine 4'-phosphoryl)serine.

It depends on pantetheine 4'-phosphate as a cofactor.

The protein operates within secondary metabolite biosynthesis. Non-reducing polyketide synthase; part of the gene cluster that mediates the biosynthesis of neosartoricin B, a prenylated anthracenone that probably exhibits T-cell antiproliferative activity, suggestive of a physiological role as an immunosuppressive agent. The non-reducing polyketide synthase nscA probably synthesizes and cyclizes the decaketide backbone. The hydrolase nscB then mediates the product release through hydrolysis followed by spontaneous decarboxylation. The prenyltransferase nscD catalyzes the addition of the dimethylallyl group to the aromatic C5. The FAD-dependent monooxygenase nscC is then responsible for the stereospecific hydroxylation at C2. Neosartoricin B can be converted into two additional compounds neosartoricins C and D. Neosartoricin C is a spirocyclic compound that is cyclized through the attack of C3 hydroxyl on C14, followed by dehydration. On the other hand, neosartoricin D is a further cyclized compound in which attack of C2 on C14 in neosartoricin C results in the formation of the acetal-containing dioxabicyclo-octanone ring. Both of these compounds are novel and possibly represent related metabolites of the gene cluster. The protein is Non-reducing polyketide synthase nscA of Arthroderma gypseum (strain ATCC MYA-4604 / CBS 118893) (Microsporum gypseum).